Consider the following 506-residue polypeptide: Probable alpha-L-arabinofuranosidase B (506 aa).

A signal peptide spans 1–26 (MLSQPSRERAFVLALGLVVSSSLAAA). Residues 27 to 343 (APCDIYSSGG…ADIVAANYAV (317 aa)) are catalytic. 3 disulfides stabilise this stretch: Cys29/Cys39, Cys89/Cys94, and Cys184/Cys185. Asp227 contributes to the substrate binding site. Glu229 serves as the catalytic Nucleophile. Position 230 (Asn230) interacts with substrate. A glycan (N-linked (GlcNAc...) asparagine) is linked at Asn285. Position 304 (Gly304) interacts with substrate. Asp305 serves as the catalytic Proton donor. Residues 344 to 506 (TSLTSGPALT…VSWVISSGFA (163 aa)) are ABD. A disulfide bond links Cys409 and Cys447. Residues His424, Asn426, Phe427, Asp443, His471, Leu476, and Asp496 each contribute to the substrate site.

This sequence belongs to the glycosyl hydrolase 54 family.

It localises to the secreted. The enzyme catalyses Hydrolysis of terminal non-reducing alpha-L-arabinofuranoside residues in alpha-L-arabinosides.. It functions in the pathway glycan metabolism; L-arabinan degradation. Its function is as follows. Alpha-L-arabinofuranosidase involved in the degradation of arabinoxylan, a major component of plant hemicellulose. Able to hydrolyze 1,5-, 1,3- and 1,2-alpha-linkages not only in L-arabinofuranosyl oligosaccharides, but also in polysaccharides containing terminal non-reducing L-arabinofuranoses in side chains, like L-arabinan, arabinogalactan and arabinoxylan. The polypeptide is Probable alpha-L-arabinofuranosidase B (abfB) (Aspergillus clavatus (strain ATCC 1007 / CBS 513.65 / DSM 816 / NCTC 3887 / NRRL 1 / QM 1276 / 107)).